Consider the following 431-residue polypeptide: Histidinol dehydrogenase (431 aa).

NAD(+) contacts are provided by Tyr-127, Gln-189, and Asn-212. Substrate-binding residues include Ser-237, Gln-259, and His-262. Positions 259 and 262 each coordinate Zn(2+). Active-site proton acceptor residues include Glu-326 and His-327. Residues His-327, Asp-360, Glu-414, and His-419 each contribute to the substrate site. Asp-360 serves as a coordination point for Zn(2+). His-419 lines the Zn(2+) pocket.

Belongs to the histidinol dehydrogenase family. Zn(2+) serves as cofactor.

It catalyses the reaction L-histidinol + 2 NAD(+) + H2O = L-histidine + 2 NADH + 3 H(+). It functions in the pathway amino-acid biosynthesis; L-histidine biosynthesis; L-histidine from 5-phospho-alpha-D-ribose 1-diphosphate: step 9/9. Catalyzes the sequential NAD-dependent oxidations of L-histidinol to L-histidinaldehyde and then to L-histidine. This chain is Histidinol dehydrogenase, found in Xanthomonas euvesicatoria pv. vesicatoria (strain 85-10) (Xanthomonas campestris pv. vesicatoria).